Here is a 260-residue protein sequence, read N- to C-terminus: Histidinol-phosphatase (260 aa).

Residues E67, D83, I85, and D86 each contribute to the Mg(2+) site. E67 is a substrate binding site. Residues I85–T88, R185, and D213 each bind substrate. D213 contributes to the Mg(2+) binding site.

The protein belongs to the inositol monophosphatase superfamily. It depends on Mg(2+) as a cofactor.

The catalysed reaction is L-histidinol phosphate + H2O = L-histidinol + phosphate. It participates in amino-acid biosynthesis; L-histidine biosynthesis; L-histidine from 5-phospho-alpha-D-ribose 1-diphosphate: step 8/9. Functionally, catalyzes the dephosphorylation of histidinol-phosphate to histidinol, the direct precursor of histidine. The sequence is that of Histidinol-phosphatase (hisN) from Mycobacterium tuberculosis (strain ATCC 25618 / H37Rv).